A 35-amino-acid chain; its full sequence is Photosystem II reaction center protein T (35 aa).

Residues 3–23 traverse the membrane as a helical segment; it reads ALVYTFLLVSTLGIIFFAIFF.

This sequence belongs to the PsbT family. In terms of assembly, PSII is composed of 1 copy each of membrane proteins PsbA, PsbB, PsbC, PsbD, PsbE, PsbF, PsbH, PsbI, PsbJ, PsbK, PsbL, PsbM, PsbT, PsbY, PsbZ, Psb30/Ycf12, at least 3 peripheral proteins of the oxygen-evolving complex and a large number of cofactors. It forms dimeric complexes.

The protein resides in the plastid. The protein localises to the chloroplast thylakoid membrane. Found at the monomer-monomer interface of the photosystem II (PS II) dimer, plays a role in assembly and dimerization of PSII. PSII is a light-driven water plastoquinone oxidoreductase, using light energy to abstract electrons from H(2)O, generating a proton gradient subsequently used for ATP formation. This Cycas revoluta (Sago palm) protein is Photosystem II reaction center protein T.